The sequence spans 362 residues: NAD(P)H-quinone oxidoreductase subunit 1, chloroplastic (362 aa).

8 helical membrane-spanning segments follow: residues 27-47 (IWIL…LVIV), 94-114 (IPLF…SFLV), 128-148 (IGVF…LMAG), 164-184 (AAQS…ISLL), 202-222 (FFGW…ISSL), 247-267 (YSGI…LVSS), 303-323 (TMSI…SITI), and 335-355 (LLNL…LLTT).

This sequence belongs to the complex I subunit 1 family. NDH is composed of at least 16 different subunits, 5 of which are encoded in the nucleus.

It is found in the plastid. Its subcellular location is the chloroplast thylakoid membrane. It carries out the reaction a plastoquinone + NADH + (n+1) H(+)(in) = a plastoquinol + NAD(+) + n H(+)(out). The catalysed reaction is a plastoquinone + NADPH + (n+1) H(+)(in) = a plastoquinol + NADP(+) + n H(+)(out). In terms of biological role, NDH shuttles electrons from NAD(P)H:plastoquinone, via FMN and iron-sulfur (Fe-S) centers, to quinones in the photosynthetic chain and possibly in a chloroplast respiratory chain. The immediate electron acceptor for the enzyme in this species is believed to be plastoquinone. Couples the redox reaction to proton translocation, and thus conserves the redox energy in a proton gradient. In Oryza sativa (Rice), this protein is NAD(P)H-quinone oxidoreductase subunit 1, chloroplastic (ndhA).